The primary structure comprises 740 residues: Melanoma-associated antigen D4 (740 aa).

The segment covering 1 to 11 (MAEGSYRKESE) has biased composition (basic and acidic residues). 4 disordered regions span residues 1 to 27 (MAEG…EVGE), 139 to 208 (ATHQ…GPST), 242 to 298 (PAGV…ALAK), and 321 to 377 (IPEP…ASQP). The segment covering 14 to 27 (NVEDMDEGSDEVGE) has biased composition (acidic residues). Composition is skewed to polar residues over residues 141-155 (HQAS…TSAA) and 162-175 (PETS…SRML). A compositionally biased stretch (low complexity) spans 185–207 (APARSPQPQTSSQAQEAAAEGPS). Residues 321–337 (IPEPESAAATSQQSAEP) show a composition bias toward low complexity. Residues 354–363 (DEYESGEEER) are compositionally biased toward acidic residues. One can recognise an MAGE domain in the interval 414 to 612 (LQERANKLVK…REWRAHFLEA (199 aa)). The tract at residues 697-722 (WRAGVSSGTNGAASASMLDGPSTSST) is disordered.

In terms of assembly, interacts with TRIM27.

In terms of biological role, may enhance ubiquitin ligase activity of RING-type zinc finger-containing E3 ubiquitin-protein ligases. Proposed to act through recruitment and/or stabilization of the Ubl-conjugating enzyme (E2) at the E3:substrate complex. The chain is Melanoma-associated antigen D4 (MAGED4) from Bos taurus (Bovine).